The following is a 72-amino-acid chain: Translation initiation factor IF-1 (72 aa).

In terms of domain architecture, S1-like spans 1–72 (MAKEELLEMR…TKGRITYRFK (72 aa)).

It belongs to the IF-1 family. In terms of assembly, component of the 30S ribosomal translation pre-initiation complex which assembles on the 30S ribosome in the order IF-2 and IF-3, IF-1 and N-formylmethionyl-tRNA(fMet); mRNA recruitment can occur at any time during PIC assembly.

Its subcellular location is the cytoplasm. In terms of biological role, one of the essential components for the initiation of protein synthesis. Stabilizes the binding of IF-2 and IF-3 on the 30S subunit to which N-formylmethionyl-tRNA(fMet) subsequently binds. Helps modulate mRNA selection, yielding the 30S pre-initiation complex (PIC). Upon addition of the 50S ribosomal subunit IF-1, IF-2 and IF-3 are released leaving the mature 70S translation initiation complex. The sequence is that of Translation initiation factor IF-1 from Sphingopyxis alaskensis (strain DSM 13593 / LMG 18877 / RB2256) (Sphingomonas alaskensis).